Reading from the N-terminus, the 311-residue chain is Malate dehydrogenase (311 aa).

NAD(+) contacts are provided by residues 7 to 13 (GAAGGIG) and Asp-34. Positions 81 and 87 each coordinate substrate. NAD(+) contacts are provided by residues Asn-94 and 117–119 (ITN). Substrate-binding residues include Asn-119 and Arg-153. The Proton acceptor role is filled by His-177. Residue Met-227 coordinates NAD(+).

The protein belongs to the LDH/MDH superfamily. MDH type 1 family. Homodimer.

It carries out the reaction (S)-malate + NAD(+) = oxaloacetate + NADH + H(+). Functionally, catalyzes the reversible oxidation of malate to oxaloacetate. The polypeptide is Malate dehydrogenase (Shewanella denitrificans (strain OS217 / ATCC BAA-1090 / DSM 15013)).